A 1027-amino-acid chain; its full sequence is Presequence protease, mitochondrial (1027 aa).

A mitochondrion-targeting transit peptide spans 1-22 (MIRQCRAGLRLCRALYQTSYRW). Histidine 98 contributes to the Zn(2+) binding site. Residue glutamate 101 is the Proton acceptor of the active site. Residues histidine 102 and glutamate 199 each contribute to the Zn(2+) site. Cysteine 113 and cysteine 550 are oxidised to a cystine. The disordered stretch occupies residues 800 to 829 (KKERKSIRPHVVEKSSSPSSSGSEISRRAT). Positions 814–823 (SSSPSSSGSE) are enriched in low complexity.

Belongs to the peptidase M16 family. PreP subfamily. In terms of assembly, monomer and homodimer; homodimerization is induced by binding of the substrate. Zn(2+) is required as a cofactor. Post-translationally, a disulfide bond locks the enzyme in the closed conformation preventing substrate entry into the catalytic chamber.

The protein resides in the mitochondrion matrix. Its activity is regulated as follows. Mainly exists in a closed and catalytically competent conformation but a closed-to-open switch allows substrate entry into the catalytic chamber. Substrate binding induces closure and dimerization. A disulfide bond may lock the enzyme in a closed conformation preventing substrate entry into the catalytic chamber, participating in redox regulation of the enzyme. Inhibited by metal-chelating agents. Inhibited by nickel and zinc excess, and slightly activated by manganese. In terms of biological role, metalloendopeptidase of the mitochondrial matrix that functions in peptide cleavage and degradation rather than in protein processing. Has an ATP-independent activity. Specifically cleaves peptides in the range of 5 to 65 residues. Shows a preference for cleavage after small polar residues and before basic residues, but without any positional preference. Degrades the transit peptides of mitochondrial proteins after their cleavage. Also degrades other unstructured peptides. The protein is Presequence protease, mitochondrial (pitrm1) of Xenopus tropicalis (Western clawed frog).